We begin with the raw amino-acid sequence, 188 residues long: MGANEDQEMELEALRSIYEGDNSFRELSPVSFQYRIGEDGDPKAFLIEVSWTETYPQTAPVISMNAFFNNTISSAVKQSILAKLQEAVEVNLGTAMTYTLFEYAKDHKEQFMENHHPGNSATPVANIISVETPTTAPSSKKKEKKEQLSKAQKRKLADKTDHKGELPRGWNWVDVVKHLSKTGSKDDE.

The RWD domain maps to 9 to 111 (MELEALRSIY…EYAKDHKEQF (103 aa)). The disordered stretch occupies residues 132-167 (TPTTAPSSKKKEKKEQLSKAQKRKLADKTDHKGELP). Positions 155–166 (KLADKTDHKGEL) are enriched in basic and acidic residues.

The sequence is that of RWD domain-containing protein 4 (Rwdd4) from Mus musculus (Mouse).